The chain runs to 237 residues: Protein YIPF4 (237 aa).

At 1–106 (MQFSPTNGDF…FNRQVVRDNP (106 aa)) the chain is on the cytoplasmic side. The helical transmembrane segment at 107–127 (DFWGPLAVVLLFSMISIYGQF) threads the bilayer. The Lumenal segment spans residues 128–131 (RVVS). The helical transmembrane segment at 132-152 (WIITIWIFGSLTIFLLARVLG) threads the bilayer. Residues 153 to 160 (GEVSYGQV) lie on the Cytoplasmic side of the membrane. The helical transmembrane segment at 161–181 (LGVIGYSLLPLIVIAPLLLVI) threads the bilayer. Topologically, residues 182-188 (GGFEVVS) are lumenal. The helical transmembrane segment at 189-209 (TLIKLFGVFWAAYSAASLLVG) threads the bilayer. Over 210-216 (DEFKTKK) the chain is Cytoplasmic. A helical membrane pass occupies residues 217 to 237 (PLLIYPIFLLYIYFLSLYTGV).

It belongs to the YIP1 family.

The protein localises to the golgi apparatus. It is found in the cis-Golgi network membrane. Its function is as follows. Involved in the maintenance of the Golgi structure. In Danio rerio (Zebrafish), this protein is Protein YIPF4 (yipf4).